The primary structure comprises 1213 residues: DNA-directed RNA polymerase subunit beta' (1213 aa).

Zn(2+)-binding residues include Cys60, Cys62, Cys75, and Cys78. Asp449, Asp451, and Asp453 together coordinate Mg(2+). Zn(2+) is bound by residues Cys818, Cys892, Cys899, and Cys902.

It belongs to the RNA polymerase beta' chain family. In terms of assembly, the RNAP catalytic core consists of 2 alpha, 1 beta, 1 beta' and 1 omega subunit. When a sigma factor is associated with the core the holoenzyme is formed, which can initiate transcription. The cofactor is Mg(2+). Requires Zn(2+) as cofactor.

It carries out the reaction RNA(n) + a ribonucleoside 5'-triphosphate = RNA(n+1) + diphosphate. DNA-dependent RNA polymerase catalyzes the transcription of DNA into RNA using the four ribonucleoside triphosphates as substrates. This is DNA-directed RNA polymerase subunit beta' from Lactiplantibacillus plantarum (strain ATCC BAA-793 / NCIMB 8826 / WCFS1) (Lactobacillus plantarum).